The sequence spans 163 residues: Phosphopantetheine adenylyltransferase (163 aa).

Residue Ser8 coordinates substrate. Residues 8–9 (SF) and His16 contribute to the ATP site. 3 residues coordinate substrate: Lys40, Thr72, and Arg86. ATP contacts are provided by residues 87-89 (GLR), Glu97, and 122-128 (HSFLSSS).

This sequence belongs to the bacterial CoaD family. Homohexamer. It depends on Mg(2+) as a cofactor.

The protein resides in the cytoplasm. It catalyses the reaction (R)-4'-phosphopantetheine + ATP + H(+) = 3'-dephospho-CoA + diphosphate. It participates in cofactor biosynthesis; coenzyme A biosynthesis; CoA from (R)-pantothenate: step 4/5. In terms of biological role, reversibly transfers an adenylyl group from ATP to 4'-phosphopantetheine, yielding dephospho-CoA (dPCoA) and pyrophosphate. In Parasynechococcus marenigrum (strain WH8102), this protein is Phosphopantetheine adenylyltransferase.